We begin with the raw amino-acid sequence, 89 residues long: DNA/RNA-binding protein Alba 2 (89 aa).

The residue at position 12 (Lys12) is an N6-acetyllysine.

This sequence belongs to the histone-like Alba family. In terms of processing, acetylated. Acetylation at Lys-12 decreases DNA-binding affinity.

It localises to the cytoplasm. The protein localises to the chromosome. Its function is as follows. Binds double-stranded DNA tightly but without sequence specificity. Involved in DNA compaction. This is DNA/RNA-binding protein Alba 2 from Saccharolobus shibatae (strain ATCC 51178 / DSM 5389 / JCM 8931 / NBRC 15437 / B12) (Sulfolobus shibatae).